A 109-amino-acid polypeptide reads, in one-letter code: Peptide chaperone MftB (109 aa).

It belongs to the peptide chaperone MftB family. Interacts with MftA and MftC.

Functionally, peptide chaperone involved in the biosynthesis of the enzyme cofactor mycofactocin (MFT). Binds MftA and MftC with high affinity, and is essential for MftC activity on MftA, likely via the formation of a ternary complex. The polypeptide is Peptide chaperone MftB (Mycobacterium ulcerans (strain Agy99)).